We begin with the raw amino-acid sequence, 152 residues long: MKTPIELKILDSRIGTEFPLPAYATPGSAGMDLRAITDTQLVIQPGETVLIPTGIAIHVADPSLAAIILPRSGLGHKHGIVLGNLVGLIDSDYQGPLMVSCWNRGSEPFTIEIGDRLAQLVFVPVVQAEFKLVDEFNQSDRGAGGFGHSGTK.

Residues 71-73 (RSG), Asn84, 88-90 (LID), and Met98 each bind substrate.

The protein belongs to the dUTPase family. It depends on Mg(2+) as a cofactor.

The enzyme catalyses dUTP + H2O = dUMP + diphosphate + H(+). It participates in pyrimidine metabolism; dUMP biosynthesis; dUMP from dCTP (dUTP route): step 2/2. This enzyme is involved in nucleotide metabolism: it produces dUMP, the immediate precursor of thymidine nucleotides and it decreases the intracellular concentration of dUTP so that uracil cannot be incorporated into DNA. The chain is Deoxyuridine 5'-triphosphate nucleotidohydrolase from Shewanella pealeana (strain ATCC 700345 / ANG-SQ1).